The sequence spans 70 residues: Large ribosomal subunit protein bL28 (70 aa).

The disordered stretch occupies residues 1–26 (MAKRCEVCGKAPRSGNTVSHSDKKSG).

This sequence belongs to the bacterial ribosomal protein bL28 family.

The sequence is that of Large ribosomal subunit protein bL28 (rpmB) from Thermotoga maritima (strain ATCC 43589 / DSM 3109 / JCM 10099 / NBRC 100826 / MSB8).